Here is a 302-residue protein sequence, read N- to C-terminus: Protein FdhE homolog (302 aa).

This sequence belongs to the FdhE family.

Its subcellular location is the cytoplasm. In terms of biological role, necessary for formate dehydrogenase activity. The protein is Protein FdhE homolog of Shewanella oneidensis (strain ATCC 700550 / JCM 31522 / CIP 106686 / LMG 19005 / NCIMB 14063 / MR-1).